We begin with the raw amino-acid sequence, 139 residues long: MEESLELEKLPRIITDVLKIVLCTALIALAIVLIIALVKITYTLSMMVLNTSSVVPYDVAEQAVMFFLYFGFIGLIVQYFKSGYHFPLRYFIYAGITAMLRLIIVNHESSVDTILFAGAILIMVIALCLVLYSNKLKNI.

Helical transmembrane passes span 20-40 (IVLC…LVKI), 60-80 (AEQA…VQYF), 85-105 (HFPL…LIIV), and 111-131 (VDTI…CLVL).

Belongs to the PsiE family.

The protein localises to the cell inner membrane. In Haemophilus influenzae (strain 86-028NP), this protein is Protein PsiE homolog.